We begin with the raw amino-acid sequence, 246 residues long: UDP-N-acetyl-D-mannosaminuronic acid transferase (246 aa).

This sequence belongs to the glycosyltransferase 26 family.

It carries out the reaction UDP-N-acetyl-alpha-D-mannosaminouronate + N-acetyl-alpha-D-glucosaminyl-di-trans,octa-cis-undecaprenyl diphosphate = beta-D-ManNAcA-(1-&gt;4)-alpha-D-GlcNAc-di-trans,octa-cis-undecaprenyl diphosphate + UDP + H(+). It functions in the pathway bacterial outer membrane biogenesis; enterobacterial common antigen biosynthesis. Functionally, catalyzes the synthesis of Und-PP-GlcNAc-ManNAcA (Lipid II), the second lipid-linked intermediate involved in enterobacterial common antigen (ECA) synthesis. This is UDP-N-acetyl-D-mannosaminuronic acid transferase from Salmonella dublin (strain CT_02021853).